The sequence spans 241 residues: Adenosine 5'-phosphosulfate reductase (241 aa).

Residues cysteine 122, cysteine 123, cysteine 205, and cysteine 208 each coordinate [4Fe-4S] cluster. Cysteine 231 acts as the Nucleophile; cysteine thiosulfonate intermediate in catalysis.

This sequence belongs to the PAPS reductase family. CysH subfamily. [4Fe-4S] cluster serves as cofactor.

The protein resides in the cytoplasm. It catalyses the reaction [thioredoxin]-disulfide + sulfite + AMP + 2 H(+) = adenosine 5'-phosphosulfate + [thioredoxin]-dithiol. It functions in the pathway sulfur metabolism; hydrogen sulfide biosynthesis; sulfite from sulfate. Catalyzes the formation of sulfite from adenosine 5'-phosphosulfate (APS) using thioredoxin as an electron donor. The polypeptide is Adenosine 5'-phosphosulfate reductase (Shouchella clausii (strain KSM-K16) (Alkalihalobacillus clausii)).